A 382-amino-acid polypeptide reads, in one-letter code: Gap junction alpha-1 protein (382 aa).

Residues 2–23 (GDWSALGKLLDKVQAYSTAGGK) lie on the Cytoplasmic side of the membrane. Position 5 is a phosphoserine (S5). The helical transmembrane segment at 24–44 (VWLSVLFIFRILLLGTAVESA) threads the bilayer. At 45-76 (WGDEQSAFRCNTQQPGCENVCYDKSFPISHVR) the chain is on the extracellular side. Cystine bridges form between C54-C192 and C187-C198. The chain crosses the membrane as a helical span at residues 77-97 (FWVLQIIFVSVPTLLYLAHVF). Over 98-155 (YVMRKEEKLNKKEEELKVAQTDGVNVEMHLKQIEIKKFKYGIEEHGKVKMRGGLLRTY) the chain is Cytoplasmic. A Glycyl lysine isopeptide (Lys-Gly) (interchain with G-Cter in SUMO) cross-link involves residue K144. A helical transmembrane segment spans residues 156-176 (IISILFKSVFEVAFLLIQWYI). Residues 177 to 207 (YGFSLSAVYTCKRDPCPHQVDCFLSRPTEKT) are Extracellular-facing. The helical transmembrane segment at 208 to 228 (IFIIFMLVVSLVSLALNIIEL) threads the bilayer. Over 229-382 (FYVFFKGVKD…SRPRPDDLEI (154 aa)) the chain is Cytoplasmic. K237 participates in a covalent cross-link: Glycyl lysine isopeptide (Lys-Gly) (interchain with G-Cter in SUMO). The interaction with NOV stretch occupies residues 244–382 (SDPYHATTGP…SRPRPDDLEI (139 aa)). Position 247 is a phosphotyrosine (Y247). Phosphoserine is present on residues S255, S257, and S262. The tract at residues 264 to 382 (KYAYFNGCSS…SRPRPDDLEI (119 aa)) is interaction with UBQLN4. Residue C271 is modified to S-nitrosocysteine. At T275 the chain carries Phosphothreonine. Phosphoserine is present on residues S306 and S314. Residues 317–332 (QNRMGQAGSTISNSHA) are compositionally biased toward polar residues. The disordered stretch occupies residues 317–382 (QNRMGQAGST…SRPRPDDLEI (66 aa)). S325 is subject to Phosphoserine; by CK1. T326 is subject to Phosphothreonine. Phosphoserine; by CK1 is present on residues S328 and S330. Phosphoserine is present on residues S344 and S365. Low complexity predominate over residues 362-374 (RPSSRASSRASSR). Position 368 is a phosphoserine; by PKC/PRKCG and PKC/PRKCD (S368). S369 and S373 each carry phosphoserine.

This sequence belongs to the connexin family. Alpha-type (group II) subfamily. As to quaternary structure, a connexon is composed of a hexamer of connexins. Interacts with SGSM3. Interacts with RIC1/CIP150. Interacts with CNST and CSNK1D. Interacts (via C-terminus) with TJP1. Interacts (via C-terminus) with SRC (via SH3 domain). Interacts (not ubiquitinated) with UBQLN4 (via UBA domain). Interacts with NOV. Interacts with TMEM65. Interacts with ANK3/ANKG and PKP2. In terms of processing, phosphorylation at Ser-325, Ser-328 and Ser-330 by CK1 modulates gap junction assembly. Phosphorylated at Ser-368 by PRKCG; phosphorylation induces disassembly of gap junction plaques and inhibition of gap junction activity. Phosphorylation at Ser-368 by PRKCD triggers its internalization into small vesicles leading to proteasome-mediated degradation. Post-translationally, sumoylated with SUMO1, SUMO2 and SUMO3, which may regulate the level of functional Cx43 gap junctions at the plasma membrane. May be desumoylated by SENP1 or SENP2. S-nitrosylation at Cys-271 is enriched at the muscle endothelial gap junction in arteries, it augments channel permeability and may regulate of smooth muscle cell to endothelial cell communication. In terms of processing, acetylated in the developing cortex; leading to delocalization from the cell membrane.

Its subcellular location is the cell membrane. The protein resides in the cell junction. The protein localises to the gap junction. It localises to the endoplasmic reticulum. Functionally, gap junction protein that acts as a regulator of bladder capacity. A gap junction consists of a cluster of closely packed pairs of transmembrane channels, the connexons, through which materials of low MW diffuse from one cell to a neighboring cell. May play a critical role in the physiology of hearing by participating in the recycling of potassium to the cochlear endolymph. Negative regulator of bladder functional capacity: acts by enhancing intercellular electrical and chemical transmission, thus sensitizing bladder muscles to cholinergic neural stimuli and causing them to contract. May play a role in cell growth inhibition through the regulation of NOV expression and localization. Plays an essential role in gap junction communication in the ventricles. The sequence is that of Gap junction alpha-1 protein (GJA1) from Oryctolagus cuniculus (Rabbit).